Consider the following 433-residue polypeptide: Adenylosuccinate synthetase (433 aa).

GTP contacts are provided by residues 11 to 17 and 39 to 41; these read GDEGKGK and GHT. Catalysis depends on aspartate 12, which acts as the Proton acceptor. Positions 12 and 39 each coordinate Mg(2+). Residues 12–15, 37–40, threonine 134, arginine 148, asparagine 230, threonine 245, and arginine 309 contribute to the IMP site; these read DEGK and NAGH. The active-site Proton donor is histidine 40. 305–311 provides a ligand contact to substrate; it reads VTTGRKR. Residues arginine 311, 337–339, and 419–421 each bind GTP; these read KLD and GTG.

The protein belongs to the adenylosuccinate synthetase family. As to quaternary structure, homodimer. It depends on Mg(2+) as a cofactor.

The protein resides in the cytoplasm. The enzyme catalyses IMP + L-aspartate + GTP = N(6)-(1,2-dicarboxyethyl)-AMP + GDP + phosphate + 2 H(+). It participates in purine metabolism; AMP biosynthesis via de novo pathway; AMP from IMP: step 1/2. Plays an important role in the de novo pathway and in the salvage pathway of purine nucleotide biosynthesis. Catalyzes the first committed step in the biosynthesis of AMP from IMP. In Saccharomyces cerevisiae (strain YJM789) (Baker's yeast), this protein is Adenylosuccinate synthetase.